Consider the following 197-residue polypeptide: MFGCLVAGRLVQTAAQQVAEDKFVFDLPDYENINHVVVFMLGTIPFPEGMGGSVYFSYPDSNGVPVWQLLGFVTNGKPSAIFKISGLKSGEGSQHPFGAMNIVRTPSVAQIGISVELLDSLAQQTPVGSAAVSSVDSFTQFTQKMLDNFYNFASSFALSQAQMTPNPSEMFIPANVVLKWYENFQRRLAQNPLFWKT.

The segment at 18-55 is required for F-X-F-G repeats-nucleoporins recognition and nuclear import; the sequence is VAEDKFVFDLPDYENINHVVVFMLGTIPFPEGMGGSVY. Positions 124 to 134 are flexible linker region involved in nuclear import of HSP70 proteins; it reads QTPVGSAAVSS.

Belongs to the OPI10 family. Forms an asymmetric homodimer; required for binding and nuclear import of HSP70 proteins. Interacts with ATP-bound HSP70 proteins. Interacts with NUP62 and NUP153 (via F-X-F-G repeats). Interacts with HSPA8. Expressed in the central white matter of newborn and adult brain, particularly in regions where oligodendrocytes are generated.

It is found in the cytoplasm. Its subcellular location is the cytosol. It localises to the nucleus. Its function is as follows. Acts as a specific nuclear import carrier for HSP70 proteins following heat-shock stress: acts by mediating the nucleoporin-dependent translocation of ATP-bound HSP70 proteins into the nucleus. HSP70 proteins import is required to protect cells from heat shock damages. Does not translocate ADP-bound HSP70 proteins into the nucleus. May also be indirectly required for organization and/or function of the secretory apparatus in Club cells in lung. In Mus musculus (Mouse), this protein is Protein Hikeshi.